The following is a 93-amino-acid chain: Large ribosomal subunit protein uL23 (93 aa).

This sequence belongs to the universal ribosomal protein uL23 family. As to quaternary structure, part of the 50S ribosomal subunit. Contacts protein L29, and trigger factor when it is bound to the ribosome.

Functionally, one of the early assembly proteins it binds 23S rRNA. One of the proteins that surrounds the polypeptide exit tunnel on the outside of the ribosome. Forms the main docking site for trigger factor binding to the ribosome. This chain is Large ribosomal subunit protein uL23, found in Nitratiruptor sp. (strain SB155-2).